The primary structure comprises 177 residues: Peptidoglycan-associated lipoprotein (177 aa).

An N-terminal signal peptide occupies residues 1 to 32 (MSRTNISALSPMQKLARNPAVIAMTLALALAG). The N-palmitoyl cysteine moiety is linked to residue Cys33. The S-diacylglycerol cysteine moiety is linked to residue Cys33. Residues 59 to 176 (QQDFTVNVGD…RAVTVLGGAG (118 aa)) enclose the OmpA-like domain.

Belongs to the Pal lipoprotein family. The Tol-Pal system is composed of five core proteins: the inner membrane proteins TolA, TolQ and TolR, the periplasmic protein TolB and the outer membrane protein Pal. They form a network linking the inner and outer membranes and the peptidoglycan layer.

It localises to the cell outer membrane. In terms of biological role, part of the Tol-Pal system, which plays a role in outer membrane invagination during cell division and is important for maintaining outer membrane integrity. This Agrobacterium fabrum (strain C58 / ATCC 33970) (Agrobacterium tumefaciens (strain C58)) protein is Peptidoglycan-associated lipoprotein.